A 681-amino-acid chain; its full sequence is DNA ligase (681 aa).

Residues 34–38 (DAEYD), 83–84 (SL), and glutamate 115 each bind NAD(+). The active-site N6-AMP-lysine intermediate is lysine 117. Residues arginine 138, glutamate 185, lysine 301, and lysine 325 each contribute to the NAD(+) site. The Zn(2+) site is built by cysteine 419, cysteine 422, cysteine 437, and cysteine 443. The 80-residue stretch at 602–681 (RKSDVLAGQT…AALLALIGER (80 aa)) folds into the BRCT domain.

It belongs to the NAD-dependent DNA ligase family. LigA subfamily. Requires Mg(2+) as cofactor. Mn(2+) serves as cofactor.

The catalysed reaction is NAD(+) + (deoxyribonucleotide)n-3'-hydroxyl + 5'-phospho-(deoxyribonucleotide)m = (deoxyribonucleotide)n+m + AMP + beta-nicotinamide D-nucleotide.. Its function is as follows. DNA ligase that catalyzes the formation of phosphodiester linkages between 5'-phosphoryl and 3'-hydroxyl groups in double-stranded DNA using NAD as a coenzyme and as the energy source for the reaction. It is essential for DNA replication and repair of damaged DNA. The polypeptide is DNA ligase (Chloroflexus aggregans (strain MD-66 / DSM 9485)).